The chain runs to 419 residues: Zinc metalloproteinase-disintegrin-like atrolysin-A (419 aa).

The Peptidase M12B domain occupies arginine 6–proline 202. Glutamate 9 provides a ligand contact to Ca(2+). A glycan (N-linked (GlcNAc...) asparagine) is linked at asparagine 72. Aspartate 93 is a Ca(2+) binding site. 3 disulfide bridges follow: cysteine 117–cysteine 197, cysteine 157–cysteine 181, and cysteine 159–cysteine 164. Histidine 142 contributes to the Zn(2+) binding site. Residue glutamate 143 is part of the active site. Residues histidine 146 and histidine 152 each contribute to the Zn(2+) site. Positions 197, 200, 212, 215, 217, 219, 222, and 225 each coordinate Ca(2+). Residues proline 210–asparagine 296 enclose the Disintegrin domain. Intrachain disulfides connect cysteine 213–cysteine 242, cysteine 224–cysteine 237, cysteine 226–cysteine 232, cysteine 236–cysteine 259, cysteine 250–cysteine 256, cysteine 255–cysteine 281, cysteine 268–cysteine 288, cysteine 275–cysteine 307, cysteine 300–cysteine 312, cysteine 319–cysteine 369, cysteine 334–cysteine 376, cysteine 347–cysteine 357, cysteine 364–cysteine 398, and cysteine 392–cysteine 403. Positions glutamate 274–aspartate 276 match the D/ECD-tripeptide motif. Residues asparagine 326, asparagine 338, and asparagine 342 are each glycosylated (N-linked (GlcNAc...) asparagine).

The protein belongs to the venom metalloproteinase (M12B) family. P-III subfamily. P-IIIa sub-subfamily. In terms of assembly, monomer. Zn(2+) serves as cofactor. In terms of tissue distribution, expressed by the venom gland.

The protein resides in the secreted. The enzyme catalyses Cleavage of 3-Asn-|-Gln-4, 5-His-|-Leu-6, 10-His-|-Leu-11, 14-Ala-|-Leu-15 and 16-Tyr-|-Leu-17 in insulin B chain. Removes C-terminal Leu from small peptides.. In terms of biological role, snake venom zinc metalloproteinase-disintegrin that causes hemorrhage by provoking the degradation of the sub-endothelial matrix proteins (fibronectin, laminin, type IV collagen, nidogen, and gelatins) and disturbances in platelet function. The recombinant cysteine-rich domain interacts with the alpha-2/beta-1 integrin (ITGA2/ITGB1) (collagen receptor), and inhibits the platelet aggregation induced by collagen. This chain is Zinc metalloproteinase-disintegrin-like atrolysin-A, found in Crotalus atrox (Western diamondback rattlesnake).